A 122-amino-acid chain; its full sequence is Glycine cleavage system H protein (122 aa).

In terms of domain architecture, Lipoyl-binding spans Met19–Thr101. The residue at position 60 (Lys60) is an N6-lipoyllysine.

It belongs to the GcvH family. As to quaternary structure, the glycine cleavage system is composed of four proteins: P, T, L and H. The cofactor is (R)-lipoate.

Its function is as follows. The glycine cleavage system catalyzes the degradation of glycine. The H protein shuttles the methylamine group of glycine from the P protein to the T protein. This Bartonella tribocorum (strain CIP 105476 / IBS 506) protein is Glycine cleavage system H protein.